Here is a 382-residue protein sequence, read N- to C-terminus: Apolipoprotein A-IV (382 aa).

The N-terminal stretch at 1 to 20 (MFLKAVVLTLSLVAVTGAQA) is a signal peptide. 13 consecutive repeat copies span residues 33 to 54 (DYFS…KSEL), 60 to 81 (ALFQ…KKLV), 82 to 103 (PFAT…EEIR), 115 to 136 (PHAD…QRLG), 137 to 158 (PYAE…NQLT), 159 to 180 (AHAQ…ASLT), 181 to 202 (PYAD…GHLT), 203 to 224 (PYAD…RSLA), 225 to 246 (PYAQ…FQMK), 247 to 268 (KNAE…QKLV), 269 to 286 (PVAE…EELQ), 287 to 308 (KSLA…RNVG), and 309 to 330 (PYGE…QKLG). Positions 33 to 330 (DYFSQLSNNA…QVEELRQKLG (298 aa)) are 13 X 22 AA approximate tandem repeats.

It belongs to the apolipoprotein A1/A4/E family. As to quaternary structure, homodimer. In terms of processing, phosphorylation sites are present in the extracellular medium.

Its subcellular location is the secreted. Functionally, may have a role in chylomicrons and VLDL secretion and catabolism. Required for efficient activation of lipoprotein lipase by ApoC-II; potent activator of LCAT. Apoa-IV is a major component of HDL and chylomicrons. The polypeptide is Apolipoprotein A-IV (APOA4) (Neomonachus schauinslandi (Hawaiian monk seal)).